Here is a 385-residue protein sequence, read N- to C-terminus: 1-deoxy-D-xylulose 5-phosphate reductoisomerase (385 aa).

NADPH-binding residues include Thr10, Gly11, Ser12, Ile13, and Asn124. Residue Lys125 coordinates 1-deoxy-D-xylulose 5-phosphate. Glu126 serves as a coordination point for NADPH. Asp150 contacts Mn(2+). The 1-deoxy-D-xylulose 5-phosphate site is built by Ser151, Glu152, Ser176, and His199. Residue Glu152 coordinates Mn(2+). Gly205 provides a ligand contact to NADPH. Residues Ser212, Asn217, Lys218, and Glu221 each coordinate 1-deoxy-D-xylulose 5-phosphate. Glu221 is a Mn(2+) binding site.

The protein belongs to the DXR family. The cofactor is Mg(2+). It depends on Mn(2+) as a cofactor.

It carries out the reaction 2-C-methyl-D-erythritol 4-phosphate + NADP(+) = 1-deoxy-D-xylulose 5-phosphate + NADPH + H(+). It participates in isoprenoid biosynthesis; isopentenyl diphosphate biosynthesis via DXP pathway; isopentenyl diphosphate from 1-deoxy-D-xylulose 5-phosphate: step 1/6. Catalyzes the NADPH-dependent rearrangement and reduction of 1-deoxy-D-xylulose-5-phosphate (DXP) to 2-C-methyl-D-erythritol 4-phosphate (MEP). The chain is 1-deoxy-D-xylulose 5-phosphate reductoisomerase from Clostridium kluyveri (strain NBRC 12016).